The following is a 658-amino-acid chain: Pentatricopeptide repeat-containing protein 7, mitochondrial (658 aa).

A mitochondrion-targeting transit peptide spans 1–29 (MRNCVSPLLFAWTKHLRLREFKIPFPNRL). PPR repeat units lie at residues 130 to 164 (VKKR…TPIW) and 220 to 254 (LYVE…SESL).

Its subcellular location is the mitochondrion. Mitochondrial RNA-binding protein required for the stability of the atp6 mRNA. This is Pentatricopeptide repeat-containing protein 7, mitochondrial (ppr7) from Schizosaccharomyces pombe (strain 972 / ATCC 24843) (Fission yeast).